We begin with the raw amino-acid sequence, 409 residues long: Formyl-CoA:oxalate CoA-transferase (409 aa).

CoA-binding positions include 17–18 (QS), 71–74 (LNTK), 95–97 (NFG), Arg103, and 135–138 (KAYE). The active-site Nucleophile is the Asp167. The tract at residues 221–245 (LAEYPNDDFGDEVPRSGNASGGGQP) is disordered. A substrate-binding site is contributed by 242–244 (GGQ).

Belongs to the CoA-transferase III family. Frc subfamily. As to quaternary structure, homodimer.

The enzyme catalyses formyl-CoA + oxalate = oxalyl-CoA + formate. It functions in the pathway metabolic intermediate degradation; oxalate degradation; CO(2) and formate from oxalate: step 1/2. Involved in the catabolism of oxalate and in the adapatation to low pH via the induction of the oxalate-dependent acid tolerance response (ATR). Catalyzes the transfer of the CoA moiety from formyl-CoA to oxalate. The polypeptide is Formyl-CoA:oxalate CoA-transferase (Streptomyces avermitilis (strain ATCC 31267 / DSM 46492 / JCM 5070 / NBRC 14893 / NCIMB 12804 / NRRL 8165 / MA-4680)).